Consider the following 201-residue polypeptide: Guanylate kinase (201 aa).

The region spanning 2–180 is the Guanylate kinase-like domain; that stretch reads SCLFVISAPS…AARDVASIVQ (179 aa). 9 to 16 lines the ATP pocket; the sequence is APSGAGKT.

This sequence belongs to the guanylate kinase family.

It is found in the cytoplasm. It catalyses the reaction GMP + ATP = GDP + ADP. Essential for recycling GMP and indirectly, cGMP. The protein is Guanylate kinase of Nitrosomonas europaea (strain ATCC 19718 / CIP 103999 / KCTC 2705 / NBRC 14298).